Reading from the N-terminus, the 187-residue chain is Accessory gene regulator protein B (187 aa).

A run of 5 helical transmembrane segments spans residues 49-69, 82-102, 106-126, 144-164, and 166-186; these read ISIF…YMLI, ILCY…LINI, FTYL…YAPA, VSII…PFYA, and FMLL…FPKE.

This sequence belongs to the AgrB family.

Its subcellular location is the cell membrane. Essential for the production of a quorum sensing system signal molecule, the autoinducing peptide (AIP). This quorum sensing system is responsible for the regulation of the expression of virulence factor genes. Involved in the proteolytic processing of AgrD, the precursor of AIP. This is Accessory gene regulator protein B from Staphylococcus aureus (strain bovine RF122 / ET3-1).